We begin with the raw amino-acid sequence, 724 residues long: Propionyl-CoA carboxylase alpha chain, mitochondrial (724 aa).

A Biotin carboxylation domain is found at 48 to 495 (KFDKILIANR…TTKYLPEVYP (448 aa)). ATP contacts are provided by residues K163, 195–256 (SRDI…PRHI), E247, and N282. The 198-residue stretch at 167–364 (KKIATAARVS…IVQQMLRVSY (198 aa)) folds into the ATP-grasp domain. Residues E322, E335, and N337 each contribute to the Mg(2+) site. Mn(2+)-binding residues include E322, E335, and N337. The active site involves R339. F395 is a biotin binding site. Positions 649-724 (KAKVDLSTVV…DEGEVLVELE (76 aa)) constitute a Biotinyl-binding domain. K690 is subject to N6-biotinyllysine.

In terms of assembly, the holoenzyme is a dodecamer composed of 6 alpha subunits and 6 beta subunits. Interacts with sir-2.2 and sir-2.3. Biotin serves as cofactor. Mg(2+) is required as a cofactor. Requires Mn(2+) as cofactor. The biotin cofactor is covalently attached to the C-terminal biotinyl-binding domain and is required for the catalytic activity.

It localises to the mitochondrion matrix. It catalyses the reaction propanoyl-CoA + hydrogencarbonate + ATP = (S)-methylmalonyl-CoA + ADP + phosphate + H(+). It carries out the reaction butanoyl-CoA + hydrogencarbonate + ATP = (2S)-ethylmalonyl-CoA + ADP + phosphate + H(+). Its pathway is metabolic intermediate metabolism; propanoyl-CoA degradation; succinyl-CoA from propanoyl-CoA: step 1/3. This is one of the 2 subunits of the biotin-dependent propionyl-CoA carboxylase (PCC), a mitochondrial enzyme involved in the catabolism of odd chain fatty acids, branched-chain amino acids isoleucine, threonine, methionine, and valine and other metabolites. Propionyl-CoA carboxylase catalyzes the carboxylation of propionyl-CoA/propanoyl-CoA to D-methylmalonyl-CoA/(S)-methylmalonyl-CoA. Within the holoenzyme, the alpha subunit catalyzes the ATP-dependent carboxylation of the biotin carried by the biotin carboxyl carrier (BCC) domain, while the beta subunit then transfers the carboxyl group from carboxylated biotin to propionyl-CoA. Propionyl-CoA carboxylase also significantly acts on butyryl-CoA/butanoyl-CoA, which is converted to ethylmalonyl-CoA/(2S)-ethylmalonyl-CoA. Other alternative minor substrates include (2E)-butenoyl-CoA/crotonoyl-CoA. The sequence is that of Propionyl-CoA carboxylase alpha chain, mitochondrial (pcca-1) from Caenorhabditis elegans.